The sequence spans 158 residues: Dysbindin domain-containing protein 2 (158 aa).

The tract at residues 79-158 (FLPCEESSPA…DGGAEPGPCS (80 aa)) is disordered. The segment covering 106 to 131 (PTSDRTTSRTSSLSSDSSNLRSPNPS) has biased composition (low complexity). Residues serine 119 and serine 120 each carry the phosphoserine modification. Position 137 is a phosphothreonine (threonine 137). Serine 142 carries the phosphoserine modification. Over residues 142-151 (SDEEDGDDGG) the composition is skewed to acidic residues.

It belongs to the dysbindin family. As to quaternary structure, monomer. Interacts with CSNK1D and CSNK1E.

In terms of biological role, may modulate the activity of casein kinase-1. Inhibits CSNK1D autophosphorylation (in vitro). The chain is Dysbindin domain-containing protein 2 (Dbndd2) from Mus musculus (Mouse).